Consider the following 214-residue polypeptide: RING-H2 finger protein ATL67 (214 aa).

The helical transmembrane segment at Leu-33 to Leu-53 threads the bilayer. The RING-type; atypical zinc finger occupies Cys-138–Arg-180.

It belongs to the RING-type zinc finger family. ATL subfamily.

Its subcellular location is the membrane. The catalysed reaction is S-ubiquitinyl-[E2 ubiquitin-conjugating enzyme]-L-cysteine + [acceptor protein]-L-lysine = [E2 ubiquitin-conjugating enzyme]-L-cysteine + N(6)-ubiquitinyl-[acceptor protein]-L-lysine.. Its pathway is protein modification; protein ubiquitination. This chain is RING-H2 finger protein ATL67 (ATL67), found in Arabidopsis thaliana (Mouse-ear cress).